The chain runs to 745 residues: Cytoplasmic polyadenylation element-binding protein 3 (745 aa).

Disordered stretches follow at residues 1 to 45 (MNLN…KSPT), 94 to 180 (VGSK…TNNS), and 204 to 283 (NKAN…FGEL). The segment covering 162-175 (LNFERDAEQKKDST) has biased composition (basic and acidic residues). Positions 219 to 229 (ETPTDSPQKGF) are enriched in polar residues. Low complexity predominate over residues 230-240 (SSSTESSPSDS). A compositionally biased stretch (polar residues) spans 241–255 (MNQFPSREHFTSANE). Residues 264 to 276 (FQQEHGNKNRDSD) are compositionally biased toward basic and acidic residues. The 23-residue stretch at 297-319 (IFVGGVPWDITEAALKDSFGEFG) folds into the RRM domain.

Cytoplasmic polyadenylation element binding protein that binds to and regulates the translation of specific mRNAs. May not be required for oogenesis. In Caenorhabditis elegans, this protein is Cytoplasmic polyadenylation element-binding protein 3 (cpb-3).